We begin with the raw amino-acid sequence, 198 residues long: Fe/S biogenesis protein NfuA (198 aa).

[4Fe-4S] cluster-binding residues include Cys-155 and Cys-158.

It belongs to the NfuA family. Homodimer. [4Fe-4S] cluster serves as cofactor.

In terms of biological role, involved in iron-sulfur cluster biogenesis. Binds a 4Fe-4S cluster, can transfer this cluster to apoproteins, and thereby intervenes in the maturation of Fe/S proteins. Could also act as a scaffold/chaperone for damaged Fe/S proteins. The sequence is that of Fe/S biogenesis protein NfuA from Haemophilus influenzae (strain 86-028NP).